We begin with the raw amino-acid sequence, 215 residues long: 3-dehydroquinate dehydratase (215 aa).

Residues 30–32 and Arg62 each bind 3-dehydroquinate; that span reads EVR. His114 (proton donor/acceptor) is an active-site residue. Lys140 functions as the Schiff-base intermediate with substrate in the catalytic mechanism. 3-dehydroquinate-binding residues include Arg178 and Gln201.

The protein belongs to the type-I 3-dehydroquinase family. In terms of assembly, homodimer.

It catalyses the reaction 3-dehydroquinate = 3-dehydroshikimate + H2O. Its pathway is metabolic intermediate biosynthesis; chorismate biosynthesis; chorismate from D-erythrose 4-phosphate and phosphoenolpyruvate: step 3/7. Its function is as follows. Involved in the third step of the chorismate pathway, which leads to the biosynthesis of aromatic amino acids. Catalyzes the cis-dehydration of 3-dehydroquinate (DHQ) and introduces the first double bond of the aromatic ring to yield 3-dehydroshikimate. The sequence is that of 3-dehydroquinate dehydratase from Methanopyrus kandleri (strain AV19 / DSM 6324 / JCM 9639 / NBRC 100938).